Here is a 183-residue protein sequence, read N- to C-terminus: Alkyl hydroperoxide reductase AhpD (183 aa).

Cys-132 functions as the Proton donor in the catalytic mechanism. Cys-132 and Cys-135 are joined by a disulfide. Cys-135 (cysteine sulfenic acid (-SOH) intermediate) is an active-site residue.

It belongs to the AhpD family.

It carries out the reaction N(6)-[(R)-dihydrolipoyl]-L-lysyl-[lipoyl-carrier protein] + a hydroperoxide = N(6)-[(R)-lipoyl]-L-lysyl-[lipoyl-carrier protein] + an alcohol + H2O. Functionally, antioxidant protein with alkyl hydroperoxidase activity. Required for the reduction of the AhpC active site cysteine residues and for the regeneration of the AhpC enzyme activity. The polypeptide is Alkyl hydroperoxide reductase AhpD (Caulobacter vibrioides (strain ATCC 19089 / CIP 103742 / CB 15) (Caulobacter crescentus)).